Here is a 333-residue protein sequence, read N- to C-terminus: Holliday junction branch migration complex subunit RuvB (333 aa).

The interval 1–182 (MDERLLSGES…FGVLSRLEYY (182 aa)) is large ATPase domain (RuvB-L). ATP is bound by residues Leu-21, Arg-22, Gly-63, Lys-66, Thr-67, Thr-68, 129 to 131 (EDF), Arg-172, Tyr-182, and Arg-219. Position 67 (Thr-67) interacts with Mg(2+). The small ATPAse domain (RuvB-S) stretch occupies residues 183 to 253 (TVDQLSAIVE…ITQMALELLQ (71 aa)). A head domain (RuvB-H) region spans residues 256–333 (KLGLDHIDHK…EHFGMEIPKV (78 aa)). DNA contacts are provided by Arg-311 and Arg-316.

It belongs to the RuvB family. In terms of assembly, homohexamer. Forms an RuvA(8)-RuvB(12)-Holliday junction (HJ) complex. HJ DNA is sandwiched between 2 RuvA tetramers; dsDNA enters through RuvA and exits via RuvB. An RuvB hexamer assembles on each DNA strand where it exits the tetramer. Each RuvB hexamer is contacted by two RuvA subunits (via domain III) on 2 adjacent RuvB subunits; this complex drives branch migration. In the full resolvosome a probable DNA-RuvA(4)-RuvB(12)-RuvC(2) complex forms which resolves the HJ.

The protein localises to the cytoplasm. The enzyme catalyses ATP + H2O = ADP + phosphate + H(+). Functionally, the RuvA-RuvB-RuvC complex processes Holliday junction (HJ) DNA during genetic recombination and DNA repair, while the RuvA-RuvB complex plays an important role in the rescue of blocked DNA replication forks via replication fork reversal (RFR). RuvA specifically binds to HJ cruciform DNA, conferring on it an open structure. The RuvB hexamer acts as an ATP-dependent pump, pulling dsDNA into and through the RuvAB complex. RuvB forms 2 homohexamers on either side of HJ DNA bound by 1 or 2 RuvA tetramers; 4 subunits per hexamer contact DNA at a time. Coordinated motions by a converter formed by DNA-disengaged RuvB subunits stimulates ATP hydrolysis and nucleotide exchange. Immobilization of the converter enables RuvB to convert the ATP-contained energy into a lever motion, pulling 2 nucleotides of DNA out of the RuvA tetramer per ATP hydrolyzed, thus driving DNA branch migration. The RuvB motors rotate together with the DNA substrate, which together with the progressing nucleotide cycle form the mechanistic basis for DNA recombination by continuous HJ branch migration. Branch migration allows RuvC to scan DNA until it finds its consensus sequence, where it cleaves and resolves cruciform DNA. The polypeptide is Holliday junction branch migration complex subunit RuvB (Bacillus cereus (strain B4264)).